A 57-amino-acid polypeptide reads, in one-letter code: uncharacterized protein (57 aa).

2 consecutive transmembrane segments (helical) span residues 2–22 (LLVV…LRSV) and 29–49 (GFLL…MTVI).

The protein resides in the cell membrane. This is an uncharacterized protein from Bacillus subtilis (strain 168).